The primary structure comprises 122 residues: Methylglyoxal synthase (122 aa).

The MGS-like domain occupies 1–122 (MRIALIAHDK…DLFIKHLKGK (122 aa)). Substrate is bound by residues histidine 8, lysine 12, 34 to 37 (TGTT), and 54 to 55 (SG). Catalysis depends on aspartate 60, which acts as the Proton donor/acceptor. Histidine 87 contributes to the substrate binding site.

It belongs to the methylglyoxal synthase family.

It catalyses the reaction dihydroxyacetone phosphate = methylglyoxal + phosphate. In terms of biological role, catalyzes the formation of methylglyoxal from dihydroxyacetone phosphate. This chain is Methylglyoxal synthase, found in Acholeplasma laidlawii (strain PG-8A).